The chain runs to 322 residues: GTP 3',8-cyclase (322 aa).

The Radical SAM core domain occupies 4-229 (NFNRNIDYLR…IPVQMKKSGP (226 aa)). Position 13 (R13) interacts with GTP. The [4Fe-4S] cluster site is built by C20 and C24. Y26 contributes to the S-adenosyl-L-methionine binding site. C27 is a [4Fe-4S] cluster binding site. Residue R64 participates in GTP binding. G68 serves as a coordination point for S-adenosyl-L-methionine. T95 is a binding site for GTP. S119 lines the S-adenosyl-L-methionine pocket. Residue K156 coordinates GTP. Residue M190 participates in S-adenosyl-L-methionine binding. [4Fe-4S] cluster-binding residues include C253 and C256. 258–260 (RLR) contacts GTP. C270 is a binding site for [4Fe-4S] cluster.

It belongs to the radical SAM superfamily. MoaA family. As to quaternary structure, monomer and homodimer. It depends on [4Fe-4S] cluster as a cofactor.

The catalysed reaction is GTP + AH2 + S-adenosyl-L-methionine = (8S)-3',8-cyclo-7,8-dihydroguanosine 5'-triphosphate + 5'-deoxyadenosine + L-methionine + A + H(+). Its pathway is cofactor biosynthesis; molybdopterin biosynthesis. In terms of biological role, catalyzes the cyclization of GTP to (8S)-3',8-cyclo-7,8-dihydroguanosine 5'-triphosphate. This chain is GTP 3',8-cyclase, found in Thermodesulfovibrio yellowstonii (strain ATCC 51303 / DSM 11347 / YP87).